The chain runs to 520 residues: Sterile alpha motif domain-containing protein 3 (520 aa).

One can recognise an SAM domain in the interval 4–71; that stretch reads WSVDQVCKWL…KYKQGNQELK (68 aa). Residues 67–104 form a disordered region; sequence NQELKPTGGPADTSTLTPAQAAPEHEQNPSPTSHGDQT. Positions 94 to 104 are enriched in polar residues; the sequence is NPSPTSHGDQT.

The protein is Sterile alpha motif domain-containing protein 3 (Samd3) of Mus musculus (Mouse).